The following is a 250-amino-acid chain: NAD(P)H-quinone oxidoreductase subunit K (250 aa).

[4Fe-4S] cluster contacts are provided by C60, C61, C125, and C156. Residues 230–250 (ELNTPEIDVSPASQSSSTYES) are disordered. Residues 240–250 (PASQSSSTYES) are compositionally biased toward polar residues.

This sequence belongs to the complex I 20 kDa subunit family. As to quaternary structure, NDH-1 can be composed of about 15 different subunits; different subcomplexes with different compositions have been identified which probably have different functions. Requires [4Fe-4S] cluster as cofactor.

It localises to the cellular thylakoid membrane. It catalyses the reaction a plastoquinone + NADH + (n+1) H(+)(in) = a plastoquinol + NAD(+) + n H(+)(out). The enzyme catalyses a plastoquinone + NADPH + (n+1) H(+)(in) = a plastoquinol + NADP(+) + n H(+)(out). Functionally, NDH-1 shuttles electrons from an unknown electron donor, via FMN and iron-sulfur (Fe-S) centers, to quinones in the respiratory and/or the photosynthetic chain. The immediate electron acceptor for the enzyme in this species is believed to be plastoquinone. Couples the redox reaction to proton translocation, and thus conserves the redox energy in a proton gradient. Cyanobacterial NDH-1 also plays a role in inorganic carbon-concentration. The chain is NAD(P)H-quinone oxidoreductase subunit K from Prochlorococcus marinus (strain MIT 9313).